The following is a 296-amino-acid chain: Small ribosomal subunit biogenesis GTPase RsgA (296 aa).

One can recognise a CP-type G domain in the interval 65-226; sequence TNELIRPPIS…VADTPGFSSL (162 aa). Residues 114 to 117 and 169 to 177 contribute to the GTP site; these read TKMD and GQSGVGKSS. Zn(2+) is bound by residues Cys-250, Cys-255, His-257, and Cys-263.

It belongs to the TRAFAC class YlqF/YawG GTPase family. RsgA subfamily. Monomer. Associates with 30S ribosomal subunit, binds 16S rRNA. Zn(2+) serves as cofactor.

Its subcellular location is the cytoplasm. One of several proteins that assist in the late maturation steps of the functional core of the 30S ribosomal subunit. Helps release RbfA from mature subunits. May play a role in the assembly of ribosomal proteins into the subunit. Circularly permuted GTPase that catalyzes slow GTP hydrolysis, GTPase activity is stimulated by the 30S ribosomal subunit. The protein is Small ribosomal subunit biogenesis GTPase RsgA of Bacillus velezensis (strain DSM 23117 / BGSC 10A6 / LMG 26770 / FZB42) (Bacillus amyloliquefaciens subsp. plantarum).